The sequence spans 122 residues: Large ribosomal subunit protein bL12 (122 aa).

It belongs to the bacterial ribosomal protein bL12 family. As to quaternary structure, homodimer. Part of the 50S ribosomal subunit; present in 4 copies per ribosome. Forms part of the ribosomal stalk which helps the ribosome interact with GTP-bound translation factors. Forms a pentameric L10(L12)2(L12)2 complex, where L10 forms an elongated spine to which 2 L12 dimers bind in a sequential fashion.

Its function is as follows. Forms part of the ribosomal stalk which helps the ribosome interact with GTP-bound translation factors. Is thus essential for accurate translation. This Geobacillus stearothermophilus (Bacillus stearothermophilus) protein is Large ribosomal subunit protein bL12.